The primary structure comprises 337 residues: Protein RecA (337 aa).

66-73 (GPESSGKT) serves as a coordination point for ATP.

Belongs to the RecA family.

It localises to the cytoplasm. Can catalyze the hydrolysis of ATP in the presence of single-stranded DNA, the ATP-dependent uptake of single-stranded DNA by duplex DNA, and the ATP-dependent hybridization of homologous single-stranded DNAs. It interacts with LexA causing its activation and leading to its autocatalytic cleavage. This is Protein RecA from Mesomycoplasma hyopneumoniae (strain 232) (Mycoplasma hyopneumoniae).